Consider the following 281-residue polypeptide: ATP phosphoribosyltransferase (281 aa).

Belongs to the ATP phosphoribosyltransferase family. Long subfamily. The cofactor is Mg(2+).

Its subcellular location is the cytoplasm. It catalyses the reaction 1-(5-phospho-beta-D-ribosyl)-ATP + diphosphate = 5-phospho-alpha-D-ribose 1-diphosphate + ATP. The protein operates within amino-acid biosynthesis; L-histidine biosynthesis; L-histidine from 5-phospho-alpha-D-ribose 1-diphosphate: step 1/9. With respect to regulation, feedback inhibited by histidine. In terms of biological role, catalyzes the condensation of ATP and 5-phosphoribose 1-diphosphate to form N'-(5'-phosphoribosyl)-ATP (PR-ATP). Has a crucial role in the pathway because the rate of histidine biosynthesis seems to be controlled primarily by regulation of HisG enzymatic activity. The polypeptide is ATP phosphoribosyltransferase (hisG) (Archaeoglobus fulgidus (strain ATCC 49558 / DSM 4304 / JCM 9628 / NBRC 100126 / VC-16)).